A 346-amino-acid chain; its full sequence is MLVLGIESSCDETGLALYDTERGLLAHALHSQIAMHREYGGVVPELASRDHIRRALPLLEEVLAASGARRDDIDAIAFTQGPGLAGALLVGASIANALAFAWDKPTIGIHHLEGHLLSPLLVAEPPPFPFVALLVSGGHTQLMRVSDVGVYETLGETLDDAAGEAFDKTAKLLGLGYPGGPEVSRLAEAGTPGAVVLPRPMLHSGDLDFSFSGLKTAVLTQMKKLEAAHAGGAVLERAKADLARGFVDAAVDVLVAKSLAALKATRLKRLVVAGGVGANRQLRAALSAAAQKRGFDVHYPDLALCTDNGAMIALAGALRLARWPSQASRDYAFTVKPRWDLASLAR.

Fe cation-binding residues include His111 and His115. Substrate-binding positions include 134–138 (LVSGG), Asp167, Gly180, and Asn279. Asp307 lines the Fe cation pocket.

It belongs to the KAE1 / TsaD family. It depends on Fe(2+) as a cofactor.

The protein localises to the cytoplasm. The catalysed reaction is L-threonylcarbamoyladenylate + adenosine(37) in tRNA = N(6)-L-threonylcarbamoyladenosine(37) in tRNA + AMP + H(+). In terms of biological role, required for the formation of a threonylcarbamoyl group on adenosine at position 37 (t(6)A37) in tRNAs that read codons beginning with adenine. Is involved in the transfer of the threonylcarbamoyl moiety of threonylcarbamoyl-AMP (TC-AMP) to the N6 group of A37, together with TsaE and TsaB. TsaD likely plays a direct catalytic role in this reaction. In Burkholderia mallei (strain ATCC 23344), this protein is tRNA N6-adenosine threonylcarbamoyltransferase.